A 410-amino-acid polypeptide reads, in one-letter code: Putative formamidase C869.04 (410 aa).

Belongs to the acetamidase/formamidase family. Homotrimer.

The protein localises to the cytoplasm. It is found in the nucleus. It catalyses the reaction formamide + H2O = formate + NH4(+). In terms of biological role, hydrolyzes formamide with the production of ammonia which can be used as a source of nitrogen for growth. May also act on acetamide, propanamide and butanamide. In Schizosaccharomyces pombe (strain 972 / ATCC 24843) (Fission yeast), this protein is Putative formamidase C869.04.